A 193-amino-acid polypeptide reads, in one-letter code: Putative manganese efflux pump MntP (193 aa).

The next 6 helical transmembrane spans lie at 8 to 28 (LLAI…GIIL), 37 to 57 (LVMA…GWMF), 61 to 81 (FSHL…AFLG), 109 to 129 (MAIA…LLGI), 138 to 158 (PILI…YFGI), and 172 to 192 (LWGG…HLFL).

The protein belongs to the MntP (TC 9.B.29) family.

It localises to the cell inner membrane. In terms of biological role, probably functions as a manganese efflux pump. This is Putative manganese efflux pump MntP from Bacteroides thetaiotaomicron (strain ATCC 29148 / DSM 2079 / JCM 5827 / CCUG 10774 / NCTC 10582 / VPI-5482 / E50).